A 100-amino-acid chain; its full sequence is Movement protein TGBp3 (100 aa).

At 1–41 (MQTAPREYSTSGPTAVLAPTTNTQHYAPYSLYRFLSSHKLD) the chain is on the lumenal side. The chain crosses the membrane as a helical span at residues 42–59 (LLLGIALLVFLYVITAAP). Topologically, residues 60-100 (KEVCQVVITGESVVIRNCQQPDRILANLNLSPWNGVKFPLL) are cytoplasmic.

Belongs to the Tymovirales TGBp3 protein family.

It localises to the host endoplasmic reticulum membrane. Its function is as follows. Plays a role in viral cell-to-cell propagation, by facilitating genome transport to neighboring plant cells through plasmosdesmata. May induce the formation of granular vesicles derived from the Endoplasmic reticulum, which align on actin filaments. In Narcissus mosaic virus (NMV), this protein is Movement protein TGBp3.